The sequence spans 263 residues: Putative S-adenosyl-L-methionine-dependent methyltransferase Mjls_0079 (263 aa).

Residues Asp-121 and 150-151 (ES) contribute to the S-adenosyl-L-methionine site.

It belongs to the UPF0677 family.

In terms of biological role, exhibits S-adenosyl-L-methionine-dependent methyltransferase activity. This chain is Putative S-adenosyl-L-methionine-dependent methyltransferase Mjls_0079, found in Mycobacterium sp. (strain JLS).